The following is a 241-amino-acid chain: Interleukin-6 (241 aa).

The signal sequence occupies residues 1 to 26 (MNSFTSALRPGPLGCSLALLLVVATA). The tract at residues 32-51 (PVREDSNTKASPDKTLTPPG) is disordered. Disulfide bonds link Cys72-Cys78 and Cys101-Cys111. N-linked (GlcNAc...) asparagine glycosylation occurs at Asn108.

This sequence belongs to the IL-6 superfamily. As to quaternary structure, component of a hexamer of two molecules each of IL6, IL6R and IL6ST; first binds to IL6R to associate with the signaling subunit IL6ST. Interacts with IL6R (via the N-terminal ectodomain); this interaction may be affected by IL6R-binding with SORL1, hence decreasing IL6 cis signaling. Interacts with SORL1 (via the N-terminal ectodomain); this interaction leads to IL6 internalization and lysosomal degradation. May form a trimeric complex with the soluble SORL1 ectodomain and soluble IL6R receptor; this interaction might stabilize circulating IL6, hence promoting IL6 trans signaling.

The protein localises to the secreted. Cytokine with a wide variety of biological functions in immunity, tissue regeneration, and metabolism. Binds to IL6R, then the complex associates to the signaling subunit IL6ST/gp130 to trigger the intracellular IL6-signaling pathway. The interaction with the membrane-bound IL6R and IL6ST stimulates 'classic signaling', whereas the binding of IL6 and soluble IL6R to IL6ST stimulates 'trans-signaling'. Alternatively, 'cluster signaling' occurs when membrane-bound IL6:IL6R complexes on transmitter cells activate IL6ST receptors on neighboring receiver cells. Functionally, IL6 is a potent inducer of the acute phase response. Rapid production of IL6 contributes to host defense during infection and tissue injury, but excessive IL6 synthesis is involved in disease pathology. In the innate immune response, is synthesized by myeloid cells, such as macrophages and dendritic cells, upon recognition of pathogens through toll-like receptors (TLRs) at the site of infection or tissue injury. In the adaptive immune response, is required for the differentiation of B cells into immunoglobulin-secreting cells. Plays a major role in the differentiation of CD4(+) T cell subsets. Essential factor for the development of T follicular helper (Tfh) cells that are required for the induction of germinal-center formation. Required to drive naive CD4(+) T cells to the Th17 lineage. Also required for proliferation of myeloma cells and the survival of plasmablast cells. Its function is as follows. Acts as an essential factor in bone homeostasis and on vessels directly or indirectly by induction of VEGF, resulting in increased angiogenesis activity and vascular permeability. Induces, through 'trans-signaling' and synergistically with IL1B and TNF, the production of VEGF. Involved in metabolic controls, is discharged into the bloodstream after muscle contraction increasing lipolysis and improving insulin resistance. 'Trans-signaling' in central nervous system also regulates energy and glucose homeostasis. Mediates, through GLP-1, crosstalk between insulin-sensitive tissues, intestinal L cells and pancreatic islets to adapt to changes in insulin demand. Also acts as a myokine. Plays a protective role during liver injury, being required for maintenance of tissue regeneration. Also has a pivotal role in iron metabolism by regulating HAMP/hepcidin expression upon inflammation or bacterial infection. Through activation of IL6ST-YAP-NOTCH pathway, induces inflammation-induced epithelial regeneration. The sequence is that of Interleukin-6 (IL6) from Oryctolagus cuniculus (Rabbit).